The following is a 315-amino-acid chain: Ribosomal RNA small subunit methyltransferase H (315 aa).

Residues Gly-37–His-39, Asp-57, Asp-105, and Gln-112 each bind S-adenosyl-L-methionine.

This sequence belongs to the methyltransferase superfamily. RsmH family.

It localises to the cytoplasm. It carries out the reaction cytidine(1402) in 16S rRNA + S-adenosyl-L-methionine = N(4)-methylcytidine(1402) in 16S rRNA + S-adenosyl-L-homocysteine + H(+). Functionally, specifically methylates the N4 position of cytidine in position 1402 (C1402) of 16S rRNA. This chain is Ribosomal RNA small subunit methyltransferase H, found in Nitrosococcus oceani (strain ATCC 19707 / BCRC 17464 / JCM 30415 / NCIMB 11848 / C-107).